A 480-amino-acid chain; its full sequence is tRNA-2-methylthio-N(6)-dimethylallyladenosine synthase (480 aa).

Residues 43 to 161 form the MTTase N-terminal domain; the sequence is KLYCLNTFGC…FPELLYSAMD (119 aa). Cys-52, Cys-88, Cys-122, Cys-198, Cys-202, and Cys-205 together coordinate [4Fe-4S] cluster. Residues 184–414 enclose the Radical SAM core domain; the sequence is RKDGVKAWVT…LETQNRISKE (231 aa). One can recognise a TRAM domain in the interval 417–480; sequence DTFLGKVVEV…TWSLEGSIVR (64 aa).

Belongs to the methylthiotransferase family. MiaB subfamily. As to quaternary structure, monomer. The cofactor is [4Fe-4S] cluster.

It localises to the cytoplasm. It carries out the reaction N(6)-dimethylallyladenosine(37) in tRNA + (sulfur carrier)-SH + AH2 + 2 S-adenosyl-L-methionine = 2-methylsulfanyl-N(6)-dimethylallyladenosine(37) in tRNA + (sulfur carrier)-H + 5'-deoxyadenosine + L-methionine + A + S-adenosyl-L-homocysteine + 2 H(+). Functionally, catalyzes the methylthiolation of N6-(dimethylallyl)adenosine (i(6)A), leading to the formation of 2-methylthio-N6-(dimethylallyl)adenosine (ms(2)i(6)A) at position 37 in tRNAs that read codons beginning with uridine. The sequence is that of tRNA-2-methylthio-N(6)-dimethylallyladenosine synthase from Acetivibrio thermocellus (strain ATCC 27405 / DSM 1237 / JCM 9322 / NBRC 103400 / NCIMB 10682 / NRRL B-4536 / VPI 7372) (Clostridium thermocellum).